The chain runs to 224 residues: PKHD-type hydroxylase Tgr7_2199 (224 aa).

In terms of domain architecture, Fe2OG dioxygenase spans 78–176 (KLSGAFFARY…RLVAVAWAES (99 aa)). Residues H96, D98, and H157 each contribute to the Fe cation site. R167 lines the 2-oxoglutarate pocket.

Fe(2+) is required as a cofactor. Requires L-ascorbate as cofactor.

The protein is PKHD-type hydroxylase Tgr7_2199 of Thioalkalivibrio sulfidiphilus (strain HL-EbGR7).